Here is a 530-residue protein sequence, read N- to C-terminus: Metal transporter Nramp5 (530 aa).

The span at 1-10 (MTGSTVSRQE) shows a compositional bias: polar residues. A disordered region spans residues 1–53 (MTGSTVSRQENSPKRPNDSNGEFKRLLVPETSQPEEDELHESPPENQILNVEE). Residues 11 to 27 (NSPKRPNDSNGEFKRLL) are compositionally biased toward basic and acidic residues. The next 12 membrane-spanning stretches (helical) occupy residues 65–85 (FSWA…IAFL), 98–118 (AVAG…GLLM), 147–167 (ILLW…EVIG), 179–199 (FLPI…ISYL), 207–227 (LEGL…WMFN), 253–273 (AVGV…SALV), 299–319 (AALF…AKGF), 341–361 (YGGG…AAGQ), 387–407 (LSAF…AIMF), 429–449 (IPFA…MGVF), 458–478 (LAWT…LDFF), and 485–505 (FLVG…IIYL).

The protein belongs to the NRAMP (TC 2.A.55) family.

The protein localises to the membrane. Its function is as follows. Seems to be involved in iron uptake. This Arabidopsis thaliana (Mouse-ear cress) protein is Metal transporter Nramp5 (NRAMP5).